Consider the following 707-residue polypeptide: Prolyl endopeptidase-like (707 aa).

Catalysis depends on charge relay system residues S538, D624, and H670.

Belongs to the peptidase S9A family. As to quaternary structure, homodimer.

The protein resides in the cytoplasm. The protein localises to the cytosol. In terms of biological role, serine peptidase whose precise substrate specificity remains unclear. Does not cleave peptides after a arginine or lysine residue. Regulates trans-Golgi network morphology and sorting by regulating the membrane binding of the AP-1 complex. May play a role in the regulation of synaptic vesicle exocytosis. The sequence is that of Prolyl endopeptidase-like (prepl) from Xenopus laevis (African clawed frog).